Reading from the N-terminus, the 826-residue chain is Arsenite oxidase subunit AioA (826 aa).

C22, C25, and C29 together coordinate [3Fe-4S] cluster. Positions 196, 204, 419, and 423 each coordinate substrate.

The protein belongs to the prokaryotic molybdopterin-containing oxidoreductase family. In terms of assembly, heterodimer consisting of a large and a small subunit. It depends on [3Fe-4S] cluster as a cofactor. The cofactor is Mo-bis(molybdopterin guanine dinucleotide).

It carries out the reaction 2 oxidized [azurin] + arsenite + H2O = 2 reduced [azurin] + arsenate + 3 H(+). Involved in the detoxification of arsenic. Oxidizes As(III)O3(3-) (arsenite) to the somewhat less toxic As(V)O4(3-) (arsenate). This is Arsenite oxidase subunit AioA (aioA) from Herminiimonas arsenicoxydans.